Reading from the N-terminus, the 399-residue chain is A-type ATP synthase subunit C (399 aa).

It belongs to the V-ATPase V0D/AC39 subunit family. As to quaternary structure, the A-type ATPase is composed of subunits A(3), B(3), C, D, E(1 or 2), F, H(2), I and K(x).

The protein localises to the cell membrane. Component of the A-type ATP synthase that produces ATP from ADP in the presence of a proton gradient across the membrane. This chain is A-type ATP synthase subunit C, found in Methanocaldococcus jannaschii (strain ATCC 43067 / DSM 2661 / JAL-1 / JCM 10045 / NBRC 100440) (Methanococcus jannaschii).